Reading from the N-terminus, the 190-residue chain is Holliday junction branch migration complex subunit RuvA (190 aa).

The tract at residues 1 to 64 is domain I; the sequence is MIGKLTGTLL…EDAQLLYGFG (64 aa). A domain II region spans residues 65–137; sequence TAQERQAFRE…LKGKLGADVG (73 aa). Residues 137-141 form a flexible linker region; that stretch reads GVRAH. The interval 142–190 is domain III; sequence AANDNQADILQALLALGYNDKEAAAALKALPADVGVSEGIKLALKSLSK.

The protein belongs to the RuvA family. In terms of assembly, homotetramer. Forms an RuvA(8)-RuvB(12)-Holliday junction (HJ) complex. HJ DNA is sandwiched between 2 RuvA tetramers; dsDNA enters through RuvA and exits via RuvB. An RuvB hexamer assembles on each DNA strand where it exits the tetramer. Each RuvB hexamer is contacted by two RuvA subunits (via domain III) on 2 adjacent RuvB subunits; this complex drives branch migration. In the full resolvosome a probable DNA-RuvA(4)-RuvB(12)-RuvC(2) complex forms which resolves the HJ.

Its subcellular location is the cytoplasm. Its function is as follows. The RuvA-RuvB-RuvC complex processes Holliday junction (HJ) DNA during genetic recombination and DNA repair, while the RuvA-RuvB complex plays an important role in the rescue of blocked DNA replication forks via replication fork reversal (RFR). RuvA specifically binds to HJ cruciform DNA, conferring on it an open structure. The RuvB hexamer acts as an ATP-dependent pump, pulling dsDNA into and through the RuvAB complex. HJ branch migration allows RuvC to scan DNA until it finds its consensus sequence, where it cleaves and resolves the cruciform DNA. The sequence is that of Holliday junction branch migration complex subunit RuvA from Acidovorax ebreus (strain TPSY) (Diaphorobacter sp. (strain TPSY)).